Here is a 163-residue protein sequence, read N- to C-terminus: NADH-quinone oxidoreductase subunit I (163 aa).

2 consecutive 4Fe-4S ferredoxin-type domains span residues 53–83 (LRRY…IEAG) and 94–123 (VRYD…EGPN). Residues C63, C66, C69, C73, C103, C106, C109, and C113 each coordinate [4Fe-4S] cluster.

Belongs to the complex I 23 kDa subunit family. In terms of assembly, NDH-1 is composed of 14 different subunits. Subunits NuoA, H, J, K, L, M, N constitute the membrane sector of the complex. The cofactor is [4Fe-4S] cluster.

Its subcellular location is the cell inner membrane. It catalyses the reaction a quinone + NADH + 5 H(+)(in) = a quinol + NAD(+) + 4 H(+)(out). Functionally, NDH-1 shuttles electrons from NADH, via FMN and iron-sulfur (Fe-S) centers, to quinones in the respiratory chain. The immediate electron acceptor for the enzyme in this species is believed to be ubiquinone. Couples the redox reaction to proton translocation (for every two electrons transferred, four hydrogen ions are translocated across the cytoplasmic membrane), and thus conserves the redox energy in a proton gradient. In Rhizobium johnstonii (strain DSM 114642 / LMG 32736 / 3841) (Rhizobium leguminosarum bv. viciae), this protein is NADH-quinone oxidoreductase subunit I.